The chain runs to 330 residues: GTPase Obg (330 aa).

The region spanning 1–159 (MNFIDEVKIC…MWIHLSLKLL (159 aa)) is the Obg domain. Residues 160–327 (SDVGLVGLPN…IVKLALKTIK (168 aa)) form the OBG-type G domain. GTP is bound by residues 166-173 (GLPNAGKS), 191-195 (FTTLV), 212-215 (DIPG), 279-282 (NKCD), and 308-310 (STY). The Mg(2+) site is built by Ser173 and Thr193.

This sequence belongs to the TRAFAC class OBG-HflX-like GTPase superfamily. OBG GTPase family. In terms of assembly, monomer. The cofactor is Mg(2+).

It is found in the cytoplasm. In terms of biological role, an essential GTPase which binds GTP, GDP and possibly (p)ppGpp with moderate affinity, with high nucleotide exchange rates and a fairly low GTP hydrolysis rate. Plays a role in control of the cell cycle, stress response, ribosome biogenesis and in those bacteria that undergo differentiation, in morphogenesis control. In Rickettsia felis (strain ATCC VR-1525 / URRWXCal2) (Rickettsia azadi), this protein is GTPase Obg.